Consider the following 271-residue polypeptide: Formamidopyrimidine-DNA glycosylase (271 aa).

P2 acts as the Schiff-base intermediate with DNA in catalysis. E3 serves as the catalytic Proton donor. The active-site Proton donor; for beta-elimination activity is K58. DNA contacts are provided by H92, R111, and R152. Residues 237 to 271 (SVYGREGEACKQCGRVLKHATIGQRATVWCGSCQR) form an FPG-type zinc finger. R261 (proton donor; for delta-elimination activity) is an active-site residue.

Belongs to the FPG family. In terms of assembly, monomer. Requires Zn(2+) as cofactor.

It carries out the reaction Hydrolysis of DNA containing ring-opened 7-methylguanine residues, releasing 2,6-diamino-4-hydroxy-5-(N-methyl)formamidopyrimidine.. It catalyses the reaction 2'-deoxyribonucleotide-(2'-deoxyribose 5'-phosphate)-2'-deoxyribonucleotide-DNA = a 3'-end 2'-deoxyribonucleotide-(2,3-dehydro-2,3-deoxyribose 5'-phosphate)-DNA + a 5'-end 5'-phospho-2'-deoxyribonucleoside-DNA + H(+). Involved in base excision repair of DNA damaged by oxidation or by mutagenic agents. Acts as a DNA glycosylase that recognizes and removes damaged bases. Has a preference for oxidized purines, such as 7,8-dihydro-8-oxoguanine (8-oxoG). Has AP (apurinic/apyrimidinic) lyase activity and introduces nicks in the DNA strand. Cleaves the DNA backbone by beta-delta elimination to generate a single-strand break at the site of the removed base with both 3'- and 5'-phosphates. This chain is Formamidopyrimidine-DNA glycosylase, found in Xanthomonas euvesicatoria pv. vesicatoria (strain 85-10) (Xanthomonas campestris pv. vesicatoria).